The sequence spans 165 residues: Growth arrest and DNA damage-inducible protein GADD45 alpha (165 aa).

Residue Thr-2 is modified to Phosphothreonine.

The protein belongs to the GADD45 family. In terms of assembly, interacts with AURKA, PCNA, GADD45GIP1 and MAPK14.

It is found in the nucleus. Its function is as follows. Might affect PCNA interaction with some CDK (cell division protein kinase) complexes; stimulates DNA excision repair in vitro and inhibits entry of cells into S phase. In T-cells, functions as a regulator of p38 MAPKs by inhibiting p88 phosphorylation and activity. The protein is Growth arrest and DNA damage-inducible protein GADD45 alpha (Gadd45a) of Rattus norvegicus (Rat).